The primary structure comprises 182 residues: LPS-assembly lipoprotein LptE (182 aa).

Positions 1 to 19 (MRHRILTLLLGLAVLVTAG) are cleaved as a signal peptide. Cys-20 is lipidated: N-palmitoyl cysteine. Residue Cys-20 is the site of S-diacylglycerol cysteine attachment.

This sequence belongs to the LptE lipoprotein family. As to quaternary structure, component of the lipopolysaccharide transport and assembly complex. Interacts with LptD.

It localises to the cell outer membrane. Functionally, together with LptD, is involved in the assembly of lipopolysaccharide (LPS) at the surface of the outer membrane. Required for the proper assembly of LptD. Binds LPS and may serve as the LPS recognition site at the outer membrane. The chain is LPS-assembly lipoprotein LptE from Photorhabdus laumondii subsp. laumondii (strain DSM 15139 / CIP 105565 / TT01) (Photorhabdus luminescens subsp. laumondii).